Reading from the N-terminus, the 603-residue chain is UvrABC system protein C (603 aa).

In terms of domain architecture, GIY-YIG spans 15 to 92 (DKPGCYLMKN…IQKHQPYFNI (78 aa)). The UVR domain occupies 197 to 232 (ATVKRQLTKKMQRAAENMEFERAAEIRDQLHYIEVT).

Belongs to the UvrC family. As to quaternary structure, interacts with UvrB in an incision complex.

The protein localises to the cytoplasm. The UvrABC repair system catalyzes the recognition and processing of DNA lesions. UvrC both incises the 5' and 3' sides of the lesion. The N-terminal half is responsible for the 3' incision and the C-terminal half is responsible for the 5' incision. The polypeptide is UvrABC system protein C (Limosilactobacillus reuteri (strain DSM 20016) (Lactobacillus reuteri)).